The following is a 261-amino-acid chain: 3-methyl-2-oxobutanoate hydroxymethyltransferase (261 aa).

Residues Asp-42 and Asp-81 each contribute to the Mg(2+) site. 3-methyl-2-oxobutanoate contacts are provided by residues 42 to 43 (DS), Asp-81, and Lys-110. Glu-112 is a binding site for Mg(2+). Glu-179 acts as the Proton acceptor in catalysis.

Belongs to the PanB family. Homodecamer; pentamer of dimers. Mg(2+) serves as cofactor.

The protein localises to the cytoplasm. The enzyme catalyses 3-methyl-2-oxobutanoate + (6R)-5,10-methylene-5,6,7,8-tetrahydrofolate + H2O = 2-dehydropantoate + (6S)-5,6,7,8-tetrahydrofolate. It participates in cofactor biosynthesis; (R)-pantothenate biosynthesis; (R)-pantoate from 3-methyl-2-oxobutanoate: step 1/2. In terms of biological role, catalyzes the reversible reaction in which hydroxymethyl group from 5,10-methylenetetrahydrofolate is transferred onto alpha-ketoisovalerate to form ketopantoate. The chain is 3-methyl-2-oxobutanoate hydroxymethyltransferase from Thermus thermophilus (strain ATCC 27634 / DSM 579 / HB8).